The chain runs to 1833 residues: Proteasome activator complex subunit 4A (1833 aa).

2 HEAT repeats span residues 460–504 and 983–1022; these read PEGP…LVDC and NFCC…NHSG. A disordered region spans residues 1095-1122; the sequence is SSSPEPNPGAASEQEELEGRKREEQKNK. Residues 1111–1122 are compositionally biased toward basic and acidic residues; it reads LEGRKREEQKNK. 4 HEAT repeats span residues 1164–1202, 1344–1382, 1626–1664, and 1670–1708; these read LPLP…QLKR, DAFL…GSKH, SDQI…YNLF, and AKAV…CNFL. The interval 1640 to 1728 is bromodomain-like (BRDL); sequence SRSSSWHARY…ESLSKTRLPK (89 aa).

It belongs to the BLM10 family. As to quaternary structure, homodimer. Interacts with the 20S and 26S proteasomes.

It localises to the cytoplasm. The protein localises to the cytosol. It is found in the nucleus. Its subcellular location is the nucleus speckle. Associated component of the proteasome that specifically recognizes acetylated histones and promotes ATP- and ubiquitin-independent degradation of core histones during DNA damage response. Recognizes and binds acetylated histones via its bromodomain-like (BRDL) region and activates the proteasome by opening the gated channel for substrate entry. Binds to the core proteasome via its C-terminus, which occupies the same binding sites as the proteasomal ATPases, opening the closed structure of the proteasome via an active gating mechanism. involved in DNA damage response in somatic cells: binds to acetylated histones and promotes degradation of histones. In Danio rerio (Zebrafish), this protein is Proteasome activator complex subunit 4A (psme4a).